A 342-amino-acid polypeptide reads, in one-letter code: S-adenosylmethionine:tRNA ribosyltransferase-isomerase (342 aa).

Belongs to the QueA family. Monomer.

Its subcellular location is the cytoplasm. The catalysed reaction is 7-aminomethyl-7-carbaguanosine(34) in tRNA + S-adenosyl-L-methionine = epoxyqueuosine(34) in tRNA + adenine + L-methionine + 2 H(+). Its pathway is tRNA modification; tRNA-queuosine biosynthesis. Transfers and isomerizes the ribose moiety from AdoMet to the 7-aminomethyl group of 7-deazaguanine (preQ1-tRNA) to give epoxyqueuosine (oQ-tRNA). The sequence is that of S-adenosylmethionine:tRNA ribosyltransferase-isomerase from Brevibacillus brevis (strain 47 / JCM 6285 / NBRC 100599).